Consider the following 284-residue polypeptide: 4-hydroxy-3-methylbut-2-enyl diphosphate reductase (284 aa).

C12 contacts [4Fe-4S] cluster. The (2E)-4-hydroxy-3-methylbut-2-enyl diphosphate site is built by H40 and H76. 2 residues coordinate dimethylallyl diphosphate: H40 and H76. Isopentenyl diphosphate is bound by residues H40 and H76. Residue C98 coordinates [4Fe-4S] cluster. H126 serves as a coordination point for (2E)-4-hydroxy-3-methylbut-2-enyl diphosphate. Dimethylallyl diphosphate is bound at residue H126. H126 provides a ligand contact to isopentenyl diphosphate. The active-site Proton donor is E128. T161 contacts (2E)-4-hydroxy-3-methylbut-2-enyl diphosphate. C191 lines the [4Fe-4S] cluster pocket. 4 residues coordinate (2E)-4-hydroxy-3-methylbut-2-enyl diphosphate: S219, S220, N221, and S263. Positions 219, 220, 221, and 263 each coordinate dimethylallyl diphosphate. Isopentenyl diphosphate-binding residues include S219, S220, N221, and S263.

Belongs to the IspH family. Requires [4Fe-4S] cluster as cofactor.

The enzyme catalyses isopentenyl diphosphate + 2 oxidized [2Fe-2S]-[ferredoxin] + H2O = (2E)-4-hydroxy-3-methylbut-2-enyl diphosphate + 2 reduced [2Fe-2S]-[ferredoxin] + 2 H(+). It carries out the reaction dimethylallyl diphosphate + 2 oxidized [2Fe-2S]-[ferredoxin] + H2O = (2E)-4-hydroxy-3-methylbut-2-enyl diphosphate + 2 reduced [2Fe-2S]-[ferredoxin] + 2 H(+). The protein operates within isoprenoid biosynthesis; dimethylallyl diphosphate biosynthesis; dimethylallyl diphosphate from (2E)-4-hydroxy-3-methylbutenyl diphosphate: step 1/1. Its pathway is isoprenoid biosynthesis; isopentenyl diphosphate biosynthesis via DXP pathway; isopentenyl diphosphate from 1-deoxy-D-xylulose 5-phosphate: step 6/6. Functionally, catalyzes the conversion of 1-hydroxy-2-methyl-2-(E)-butenyl 4-diphosphate (HMBPP) into a mixture of isopentenyl diphosphate (IPP) and dimethylallyl diphosphate (DMAPP). Acts in the terminal step of the DOXP/MEP pathway for isoprenoid precursor biosynthesis. This is 4-hydroxy-3-methylbut-2-enyl diphosphate reductase from Petrotoga mobilis (strain DSM 10674 / SJ95).